The following is a 325-amino-acid chain: Phospho-N-acetylmuramoyl-pentapeptide-transferase (325 aa).

A run of 10 helical transmembrane segments spans residues 5-25 (VLLL…PIFI), 57-77 (LMIL…LSIF), 81-101 (VLLL…DDFI), 117-137 (LIGQ…MGLS), 146-166 (SLSI…LVGA), 178-198 (GLVA…AWAT), 200-220 (YFEV…FLVF), 227-247 (VFMG…IAIM), 252-272 (ILLI…IIQV), and 304-324 (VTFW…EVWI).

It belongs to the glycosyltransferase 4 family. MraY subfamily. Requires Mg(2+) as cofactor.

The protein localises to the cell membrane. The catalysed reaction is UDP-N-acetyl-alpha-D-muramoyl-L-alanyl-gamma-D-glutamyl-meso-2,6-diaminopimeloyl-D-alanyl-D-alanine + di-trans,octa-cis-undecaprenyl phosphate = di-trans,octa-cis-undecaprenyl diphospho-N-acetyl-alpha-D-muramoyl-L-alanyl-D-glutamyl-meso-2,6-diaminopimeloyl-D-alanyl-D-alanine + UMP. Its pathway is cell wall biogenesis; peptidoglycan biosynthesis. Functionally, catalyzes the initial step of the lipid cycle reactions in the biosynthesis of the cell wall peptidoglycan: transfers peptidoglycan precursor phospho-MurNAc-pentapeptide from UDP-MurNAc-pentapeptide onto the lipid carrier undecaprenyl phosphate, yielding undecaprenyl-pyrophosphoryl-MurNAc-pentapeptide, known as lipid I. In Halalkalibacterium halodurans (strain ATCC BAA-125 / DSM 18197 / FERM 7344 / JCM 9153 / C-125) (Bacillus halodurans), this protein is Phospho-N-acetylmuramoyl-pentapeptide-transferase.